The chain runs to 332 residues: Beta-ketoacyl-[acyl-carrier-protein] synthase III (332 aa).

Catalysis depends on residues cysteine 114 and histidine 255. An ACP-binding region spans residues 256–260; it reads QANLR. Residue asparagine 285 is part of the active site.

The protein belongs to the thiolase-like superfamily. FabH family. As to quaternary structure, homodimer.

The protein resides in the cytoplasm. It carries out the reaction malonyl-[ACP] + acetyl-CoA + H(+) = 3-oxobutanoyl-[ACP] + CO2 + CoA. It participates in lipid metabolism; fatty acid biosynthesis. In terms of biological role, catalyzes the condensation reaction of fatty acid synthesis by the addition to an acyl acceptor of two carbons from malonyl-ACP. Catalyzes the first condensation reaction which initiates fatty acid synthesis and may therefore play a role in governing the total rate of fatty acid production. Possesses both acetoacetyl-ACP synthase and acetyl transacylase activities. Its substrate specificity determines the biosynthesis of branched-chain and/or straight-chain of fatty acids. In Sulfurimonas denitrificans (strain ATCC 33889 / DSM 1251) (Thiomicrospira denitrificans (strain ATCC 33889 / DSM 1251)), this protein is Beta-ketoacyl-[acyl-carrier-protein] synthase III.